Consider the following 274-residue polypeptide: NAD kinase (274 aa).

The Proton acceptor role is filled by D60. Residues 60 to 61 (DG), K65, 127 to 128 (NE), and R152 contribute to the NAD(+) site.

The protein belongs to the NAD kinase family. A divalent metal cation serves as cofactor.

The protein resides in the cytoplasm. The catalysed reaction is NAD(+) + ATP = ADP + NADP(+) + H(+). Functionally, involved in the regulation of the intracellular balance of NAD and NADP, and is a key enzyme in the biosynthesis of NADP. Catalyzes specifically the phosphorylation on 2'-hydroxyl of the adenosine moiety of NAD to yield NADP. This chain is NAD kinase, found in Mycoplasmoides gallisepticum (strain R(low / passage 15 / clone 2)) (Mycoplasma gallisepticum).